The following is a 1461-amino-acid chain: Formin-3 (1461 aa).

2 disordered regions span residues 1 to 67 (MASK…SDDN) and 431 to 457 (YREE…RPTT). The span at 12-28 (TSRSIQSRNSSYSTSSN) shows a compositional bias: low complexity. Polar residues-rich tracts occupy residues 29 to 53 (ERIG…STND) and 438 to 457 (PHGN…RPTT). One can recognise a GBD/FH3 domain in the interval 92–508 (SETEQLRKIY…KIQKSMQLLT (417 aa)). Residues 137-515 (QHTVLDEATY…LLTHTLEALE (379 aa)) form an interaction with tea4 region. Positions 540-639 (GTAEEIAEYK…VQNSNEQHLQ (100 aa)) form a coiled coil. A disordered region spans residues 683-811 (GIPVRVHTPS…EPKIDETSLT (129 aa)). Residues 700–718 (SFSGSEISSSPSPLLPDVS) are compositionally biased toward low complexity. Residues 731-784 (SPPPPPPAVIVPTPAPAPIPVPPPAPIMGGPPPPPPPPGVAGAGPPPPPPPPPA) are compositionally biased toward pro residues. Residues 801 to 811 (PEPKIDETSLT) show a composition bias toward basic and acidic residues. In terms of domain architecture, FH2 spans 845–1257 (LRDLHKPTRP…RIMSEDRDKL (413 aa)). 2 disordered regions span residues 1268 to 1337 (AKYR…AEEK) and 1416 to 1461 (ERLQ…RQKQ). Composition is skewed to basic and acidic residues over residues 1273–1315 (KREL…KTGD) and 1325–1337 (MEDL…AEEK). A compositionally biased stretch (polar residues) spans 1445-1454 (TNGSNASNLV).

The protein belongs to the formin homology family. As to quaternary structure, interacts with rax2, rho3 and tea4. Interacts with tea1 in the presence of tea4.

It localises to the cytoplasm. The protein resides in the cell cortex. Its subcellular location is the cell tip. Its function is as follows. Involved in controlling polarized cell growth. Required for interphase actin cable formation and microtubule organization. In Schizosaccharomyces pombe (strain 972 / ATCC 24843) (Fission yeast), this protein is Formin-3 (for3).